The sequence spans 397 residues: Odorant receptor 2a (397 aa).

The Cytoplasmic portion of the chain corresponds to 1 to 38 (MEKQEDFKLNTHSAVYYHWRVWELTGLMRPPGVSSLLY). A helical transmembrane segment spans residues 39-59 (VVYSITVNLVVTVLFPLSLLA). Over 60 to 72 (RLLFTTNMAGLCE) the chain is Extracellular. The chain crosses the membrane as a helical span at residues 73 to 92 (NLTITITDIVANLKFANVYM). Residues 93–131 (VRKQLHEIRSLLRLMDARARLVGDPEEISALRKEVNIAQ) lie on the Cytoplasmic side of the membrane. The chain crosses the membrane as a helical span at residues 132–150 (GTFRTFASIFVFGTTLSCV). The Extracellular portion of the chain corresponds to 151-176 (RVVVRPDRELLYPAWFGVDWMHSTRN). Residues 177–197 (YVLINIYQLFGLIVQAIQNCA) form a helical membrane-spanning segment. Residues 198-272 (SDSYPPAFLC…IIQRVLSVPC (75 aa)) are Cytoplasmic-facing. The helical transmembrane segment at 273-293 (MAQFVCSAAVQCTVAMHFLYV) threads the bilayer. Over 294–301 (ADDHDHTA) the chain is Extracellular. A helical membrane pass occupies residues 302–322 (MIISIVFFSAVTLEVFVICYF). Over 323-363 (GDRMRTQSEALCDAFYDCNWIEQLPKFKRELLFTLARTQRP) the chain is Cytoplasmic. A helical membrane pass occupies residues 364–383 (SLIYAGNYIALSLETFEQVM). The Extracellular segment spans residues 384 to 397 (RFTYSVFTLLLRAK).

This sequence belongs to the insect chemoreceptor superfamily. Heteromeric odorant receptor channel (TC 1.A.69) family. Or2a subfamily. As to quaternary structure, interacts with Orco. Complexes exist early in the endomembrane system in olfactory sensory neurons (OSNs), coupling these complexes to the conserved ciliary trafficking pathway. As to expression, expressed in 20 sensory neurons on the distal edge of the antenna.

The protein localises to the cell membrane. Its function is as follows. Odorant receptor which mediates acceptance or avoidance behavior, depending on its substrates. The odorant receptor repertoire encodes a large collection of odor stimuli that vary widely in identity, intensity, and duration. May form a complex with Orco to form odorant-sensing units, providing sensitive and prolonged odorant signaling and calcium permeability. The protein is Odorant receptor 2a (Or2a) of Drosophila melanogaster (Fruit fly).